A 156-amino-acid polypeptide reads, in one-letter code: Small ribosomal subunit protein uS7c (156 aa).

Belongs to the universal ribosomal protein uS7 family. In terms of assembly, part of the 30S ribosomal subunit.

The protein localises to the plastid. The protein resides in the chloroplast. Functionally, one of the primary rRNA binding proteins, it binds directly to 16S rRNA where it nucleates assembly of the head domain of the 30S subunit. This chain is Small ribosomal subunit protein uS7c (rps7), found in Pyropia yezoensis (Susabi-nori).